Consider the following 289-residue polypeptide: tRNA pseudouridine synthase B (289 aa).

The Nucleophile role is filled by aspartate 55. The tract at residues 243–289 (PGGVLAQHEREGSRALDSAAGNAEHDREEARIADNNREDRSRQHADR) is disordered. Positions 265–289 (AEHDREEARIADNNREDRSRQHADR) are enriched in basic and acidic residues.

It belongs to the pseudouridine synthase TruB family. Type 1 subfamily.

It carries out the reaction uridine(55) in tRNA = pseudouridine(55) in tRNA. In terms of biological role, responsible for synthesis of pseudouridine from uracil-55 in the psi GC loop of transfer RNAs. This Chlorobium luteolum (strain DSM 273 / BCRC 81028 / 2530) (Pelodictyon luteolum) protein is tRNA pseudouridine synthase B.